The sequence spans 585 residues: Putative phospholipase B-like 2 (585 aa).

An N-terminal signal peptide occupies residues 1-35 (MAAPMDRTHGGRAARALRRALALASLAGLLLSGLA). 3 N-linked (GlcNAc...) asparagine glycosylation sites follow: Asn84, Asn102, and Asn106. Cys138 and Cys148 are oxidised to a cystine. Residues Asn227 and Asn432 are each glycosylated (N-linked (GlcNAc...) asparagine). Cys488 and Cys491 are disulfide-bonded. N-linked (GlcNAc...) asparagine glycosylation occurs at Asn511.

The protein belongs to the phospholipase B-like family. In terms of assembly, interacts with IGF2R. Post-translationally, glycosylated; contains mannose 6-phosphate sugars.

It is found in the lysosome lumen. Functionally, putative phospholipase. This Rattus norvegicus (Rat) protein is Putative phospholipase B-like 2 (Plbd2).